We begin with the raw amino-acid sequence, 255 residues long: Taurine import ATP-binding protein TauB (255 aa).

Positions 2–229 constitute an ABC transporter domain; sequence LNVSGLWAEY…RYAEGEPCRA (228 aa). 34–41 provides a ligand contact to ATP; the sequence is GPSGCGKT.

The protein belongs to the ABC transporter superfamily. Taurine importer (TC 3.A.1.17.1) family. In terms of assembly, the complex is composed of two ATP-binding proteins (TauB), two transmembrane proteins (TauC) and a solute-binding protein (TauA).

Its subcellular location is the cell inner membrane. It catalyses the reaction taurine(out) + ATP + H2O = taurine(in) + ADP + phosphate + H(+). Its function is as follows. Part of the ABC transporter complex TauABC involved in taurine import. Responsible for energy coupling to the transport system. The sequence is that of Taurine import ATP-binding protein TauB from Yersinia pseudotuberculosis serotype I (strain IP32953).